The chain runs to 88 residues: MIKDEKINKIYALVKSALDNTDVKNDKKLSLLLMRIQETSINGELFYDYKKELQPAISMYSIQHNFRVPDDLVKLLALVQTPKAWSGF.

Its function is as follows. Could impart immunity to carnobacteriocin-BM1 to naturally sensitive host strains. This Carnobacterium maltaromaticum (Carnobacterium piscicola) protein is Putative carnobacteriocin-BM1 immunity protein.